A 1026-amino-acid polypeptide reads, in one-letter code: Cadherin-like and PC-esterase domain-containing protein 1 (1026 aa).

The signal sequence occupies residues 1 to 34 (MVCRPVFPCRRRFCPRPFLVGLVVAICLFYQTLT). Residues Asn-251, Asn-404, Asn-413, Asn-737, Asn-791, and Asn-985 are each glycosylated (N-linked (GlcNAc...) asparagine).

Belongs to the PC-esterase family.

The sequence is that of Cadherin-like and PC-esterase domain-containing protein 1 (CPED1) from Homo sapiens (Human).